Reading from the N-terminus, the 236-residue chain is MYEGVHAHPDGNATVARFAETAASRGYDGIVVRNHGDAQTDYDADAVAAEYGVEVVSGIEIRTDDTAQASGLVGNYRSKRDIVCVHGGELNRFAVEEPKVDVLAHPMRDGDVNHVLAKAAAENGVHFEFNFGRVLRADGGKRVQAIQGLRKLRELVDQYDAPYVVSADPESHLELRSSRDLAAVGETVGFDREAITDGLAAWADIVERNRRRRSAAVVEPGVRIERADGETDDSRE.

It belongs to the eukaryotic/archaeal RNase P protein component 3 family. As to quaternary structure, consists of a catalytic RNA component and at least 4-5 protein subunits.

The protein localises to the cytoplasm. The catalysed reaction is Endonucleolytic cleavage of RNA, removing 5'-extranucleotides from tRNA precursor.. Part of ribonuclease P, a protein complex that generates mature tRNA molecules by cleaving their 5'-ends. This chain is Ribonuclease P protein component 3, found in Natronomonas pharaonis (strain ATCC 35678 / DSM 2160 / CIP 103997 / JCM 8858 / NBRC 14720 / NCIMB 2260 / Gabara) (Halobacterium pharaonis).